Reading from the N-terminus, the 174-residue chain is NADH-ubiquinone oxidoreductase chain 6 (174 aa).

5 consecutive transmembrane segments (helical) span residues 1-21, 24-44, 47-67, 86-106, and 151-171; these read MTYV…GFSS, SPIY…AIIL, GGGY…MVVF, VEVL…VLWV, and WLVV…IEIA.

The protein belongs to the complex I subunit 6 family. In terms of assembly, core subunit of respiratory chain NADH dehydrogenase (Complex I) which is composed of 45 different subunits.

The protein resides in the mitochondrion inner membrane. It carries out the reaction a ubiquinone + NADH + 5 H(+)(in) = a ubiquinol + NAD(+) + 4 H(+)(out). Core subunit of the mitochondrial membrane respiratory chain NADH dehydrogenase (Complex I) which catalyzes electron transfer from NADH through the respiratory chain, using ubiquinone as an electron acceptor. Essential for the catalytic activity and assembly of complex I. This is NADH-ubiquinone oxidoreductase chain 6 (MT-ND6) from Gorilla gorilla gorilla (Western lowland gorilla).